A 182-amino-acid polypeptide reads, in one-letter code: Bifunctional protein PyrR (182 aa).

The PRPP-binding motif lies at 99–111; the sequence is VVLVDDVLFTGRT.

Belongs to the purine/pyrimidine phosphoribosyltransferase family. PyrR subfamily.

It carries out the reaction UMP + diphosphate = 5-phospho-alpha-D-ribose 1-diphosphate + uracil. Functionally, regulates the transcription of the pyrimidine nucleotide (pyr) operon in response to exogenous pyrimidines. Its function is as follows. Also displays a weak uracil phosphoribosyltransferase activity which is not physiologically significant. This is Bifunctional protein PyrR from Chloroflexus aurantiacus (strain ATCC 29366 / DSM 635 / J-10-fl).